A 449-amino-acid polypeptide reads, in one-letter code: Protein trichome birefringence-like 35 (449 aa).

Residues 12–29 (LPLAGLLFILVVTFMILF) form a helical; Signal-anchor for type II membrane protein membrane-spanning segment. The GDS motif signature appears at 185–187 (GDS). Positions 428-442 (DCTHWCVPGVPDVWN) match the DCXHWCLPGXXDXWN motif motif.

Belongs to the PC-esterase family. TBL subfamily.

It localises to the membrane. In terms of biological role, may act as a bridging protein that binds pectin and other cell wall polysaccharides. Probably involved in maintaining esterification of pectins. May be involved in the specific O-acetylation of cell wall polymers. The protein is Protein trichome birefringence-like 35 (TBL35) of Arabidopsis thaliana (Mouse-ear cress).